The primary structure comprises 256 residues: Type III pantothenate kinase (256 aa).

Residue 6 to 13 participates in ATP binding; sequence DIGNSSIV. Substrate is bound by residues Y101 and 108–111; that span reads GADR. Catalysis depends on D110, which acts as the Proton acceptor. D130 contacts K(+). An ATP-binding site is contributed by T133. T185 is a substrate binding site.

It belongs to the type III pantothenate kinase family. In terms of assembly, homodimer. NH4(+) serves as cofactor. Requires K(+) as cofactor.

It localises to the cytoplasm. The enzyme catalyses (R)-pantothenate + ATP = (R)-4'-phosphopantothenate + ADP + H(+). It participates in cofactor biosynthesis; coenzyme A biosynthesis; CoA from (R)-pantothenate: step 1/5. Its function is as follows. Catalyzes the phosphorylation of pantothenate (Pan), the first step in CoA biosynthesis. The polypeptide is Type III pantothenate kinase (Shouchella clausii (strain KSM-K16) (Alkalihalobacillus clausii)).